Reading from the N-terminus, the 106-residue chain is Iron-sulfur cluster assembly protein CyaY (106 aa).

This sequence belongs to the frataxin family.

Involved in iron-sulfur (Fe-S) cluster assembly. May act as a regulator of Fe-S biogenesis. The sequence is that of Iron-sulfur cluster assembly protein CyaY from Cronobacter sakazakii (strain ATCC BAA-894) (Enterobacter sakazakii).